Reading from the N-terminus, the 366-residue chain is Uroporphyrinogen decarboxylase (366 aa).

Residues 28–32 (RQAGR), Asp78, Tyr160, Thr215, and His333 each bind substrate.

This sequence belongs to the uroporphyrinogen decarboxylase family. In terms of assembly, homodimer.

It localises to the cytoplasm. It carries out the reaction uroporphyrinogen III + 4 H(+) = coproporphyrinogen III + 4 CO2. It functions in the pathway porphyrin-containing compound metabolism; protoporphyrin-IX biosynthesis; coproporphyrinogen-III from 5-aminolevulinate: step 4/4. In terms of biological role, catalyzes the decarboxylation of four acetate groups of uroporphyrinogen-III to yield coproporphyrinogen-III. The sequence is that of Uroporphyrinogen decarboxylase from Paraburkholderia phytofirmans (strain DSM 17436 / LMG 22146 / PsJN) (Burkholderia phytofirmans).